Reading from the N-terminus, the 377-residue chain is MSNEGKPLQSTESTKIDAKSGEKEKALSLVVGQIERNFGKGSIMRLGDASKMRVETISTGALTLDLALGGGYPKGRVIEVYGPESSGKTTLTLHAIAEIQRNGGVAAFVDAEHALDPVYAASLGVDVENLLVSQPDTGEMALEIVDQLIRSAAVDLVVVDSVAALTPRSEIEGEMGDHSVGAQARLMSQAMRKITGNIGKSGCTVIFLNQLRLKIGITYGNPETTTGGNALKFYASVRLDIRRIQTLKRGTEEYGIRAKVKVAKNKVAPPFRIAEFDILFGKGISTLGCLLDLADETNVVTRKGAWYSYEGDNIGQGRDNTITWLEQNPESKEIIEKLVKEKLTEGSEVSANSMRPLASAARQASSRPKLSQVSANG.

Over residues 1–13 the composition is skewed to polar residues; the sequence is MSNEGKPLQSTES. Residues 1–20 form a disordered region; the sequence is MSNEGKPLQSTESTKIDAKS. Position 82-89 (82-89) interacts with ATP; the sequence is GPESSGKT. Residues 346–377 are disordered; it reads GSEVSANSMRPLASAARQASSRPKLSQVSANG. Residues 362–377 are compositionally biased toward polar residues; the sequence is RQASSRPKLSQVSANG.

This sequence belongs to the RecA family.

It localises to the cytoplasm. Can catalyze the hydrolysis of ATP in the presence of single-stranded DNA, the ATP-dependent uptake of single-stranded DNA by duplex DNA, and the ATP-dependent hybridization of homologous single-stranded DNAs. It interacts with LexA causing its activation and leading to its autocatalytic cleavage. This chain is Protein RecA, found in Prochlorococcus marinus (strain NATL1A).